A 499-amino-acid chain; its full sequence is Probable folate-biopterin transporter 2 (499 aa).

Helical transmembrane passes span 43 to 63, 92 to 112, 116 to 136, 141 to 161, 185 to 205, 209 to 229, 266 to 286, 302 to 322, 330 to 350, 354 to 374, 399 to 419, and 435 to 455; these read WSFVFGVVSLYGINQGLGGSL, IPWIIKPLWGILTDVLPIFGF, PYFILAGVLGVVSLLFISLHS, YLALFWMTISSAAMAIADVTI, LSSSIGALLGFFMSGILVHLV, GVFGLLTFPFALVSVVGIVFS, LYMYISLTLGLNIHEGLFYWF, FILSIGSIGSILAATLYQLVL, LCLWTQLLFALSGMLDLILVF, LKFGLPDYLFIVVDEIVSQMI, FALLMSIDNAGLMTSSWLGGI, and WLAVLVRNVMRLLPLCFLFLV.

Belongs to the major facilitator superfamily. Folate-biopterin transporter (TC 2.A.71) family.

It is found in the membrane. Functionally, could mediate folate transport. The protein is Probable folate-biopterin transporter 2 of Arabidopsis thaliana (Mouse-ear cress).